Consider the following 340-residue polypeptide: MSSSQESTFTSASAAAQVNASALDLLPVYAKELIAGGAAGAFAKTAVAPLERVKILLQTRTEGFQSLGILQSLRKLWQYEGIRGFYKGNGASVLRIVPYAALHYMTYEQYRCWILNNSASSIGTGPVVDLLAGSAAGGTAVLCTYPLDLARTKLAYQVSNVGQTGNALGNSGQQQTYNGIKDVFKTVYKEGGARSLYRGVGPTLIGILPYAGLKFYIYEDLKSQVPDDYKDSVILKLSCGALAGLFGQTLTYPLDVVRRQMQVQSKQSQNSSDGFRIRGTFQGLLLIIRCQGWRQLFAGLSLNYVKVVPSVAIGFTTYDMMKALLGVPPRERVHASGGNK.

Transmembrane regions (helical) follow at residues 22 to 42, 85 to 105, 130 to 147, 199 to 219, 237 to 257, and 297 to 317; these read ALDL…AGAF, FYKG…LHYM, LLAG…TYPL, GVGP…YIYE, LSCG…LDVV, and FAGL…GFTT. Solcar repeat units lie at residues 27–113, 124–224, and 231–324; these read PVYA…YRCW, TGPV…LKSQ, and DSVI…MKAL.

The protein belongs to the mitochondrial carrier (TC 2.A.29) family. Expressed throughout the plant.

It is found in the mitochondrion inner membrane. Its function is as follows. Required for the accumulation of coenzyme A in the mitochondrial matrix. This Zea mays (Maize) protein is Mitochondrial carrier protein CoAc1.